A 604-amino-acid chain; its full sequence is uncharacterized protein (604 aa).

Residues 45–329 (LPLSFLTVLI…LGQVYNQLLM (285 aa)) form the ABC transmembrane type-1 domain. Helical transmembrane passes span 49–69 (FLTV…IGVY), 82–102 (LLIQ…AANV), 162–182 (VINL…LFTL), 184–204 (PELT…STSL), 273–293 (LVEM…ATLI), and 297–317 (TITI…WEPI). One can recognise an ABC transporter domain in the interval 363-597 (ISFEEVEFSY…GGIYAGLVKA (235 aa)). 396–403 (GHTGSGKT) lines the ATP pocket.

The protein belongs to the ABC transporter superfamily.

The protein localises to the cell membrane. This is an uncharacterized protein from Bacillus subtilis (strain 168).